Here is a 22-residue protein sequence, read N- to C-terminus: Plasticin-TR (22 aa).

The protein belongs to the frog skin active peptide (FSAP) family. Plasticin subfamily. As to quaternary structure, exhibits a propensity to self-association and forms helical oligomers in membrane-mimetic environments. In terms of tissue distribution, expressed by the skin glands.

The protein localises to the secreted. It is found in the target cell membrane. Has no antimicrobial activity against Gram-negative bacterium E.coli ATCC 25922, Gram-positive bacterium S.epidermidis ATCC 12228 and against fungus C.albicans ATCC 24433 at concentrations up to 100 uM. Has an anti-inflammatory effect, since it inhibits the production of the pro-inflammatory cytokines TNF-alpha and IL-1 beta. Has high activity of stimulation of insulin release, which may protect the species from being eaten by predators by causing fatal hypoglycemia. Is not cytotoxic to cancer line cells. Does not show hemolysis on mouse erythrocytes. Adopts a mixture of alpha-helical and beta-sheet structures. The sequence is that of Plasticin-TR from Phyllomedusa trinitatis (Trinidad leaf frog).